The primary structure comprises 235 residues: Phosphoribosylaminoimidazole-succinocarboxamide synthase (235 aa).

This sequence belongs to the SAICAR synthetase family.

It carries out the reaction 5-amino-1-(5-phospho-D-ribosyl)imidazole-4-carboxylate + L-aspartate + ATP = (2S)-2-[5-amino-1-(5-phospho-beta-D-ribosyl)imidazole-4-carboxamido]succinate + ADP + phosphate + 2 H(+). It functions in the pathway purine metabolism; IMP biosynthesis via de novo pathway; 5-amino-1-(5-phospho-D-ribosyl)imidazole-4-carboxamide from 5-amino-1-(5-phospho-D-ribosyl)imidazole-4-carboxylate: step 1/2. This chain is Phosphoribosylaminoimidazole-succinocarboxamide synthase, found in Chlorobium chlorochromatii (strain CaD3).